A 376-amino-acid chain; its full sequence is Chaperone protein DnaJ (376 aa).

Residues 5–70 (DYYEVLGVAR…EKRARYDRFG (66 aa)) enclose the J domain. The CR-type zinc finger occupies 137–215 (GDEVTLRLPK…CKGSGQTQQV (79 aa)). Zn(2+)-binding residues include Cys-150, Cys-153, Cys-167, Cys-170, Cys-189, Cys-192, Cys-203, and Cys-206. CXXCXGXG motif repeat units follow at residues 150–157 (CDECGGSG), 167–174 (CRHCGGAG), 189–196 (CPVCRGEG), and 203–210 (CPKCKGSG).

Belongs to the DnaJ family. Homodimer. The cofactor is Zn(2+).

It localises to the cytoplasm. Its function is as follows. Participates actively in the response to hyperosmotic and heat shock by preventing the aggregation of stress-denatured proteins and by disaggregating proteins, also in an autonomous, DnaK-independent fashion. Unfolded proteins bind initially to DnaJ; upon interaction with the DnaJ-bound protein, DnaK hydrolyzes its bound ATP, resulting in the formation of a stable complex. GrpE releases ADP from DnaK; ATP binding to DnaK triggers the release of the substrate protein, thus completing the reaction cycle. Several rounds of ATP-dependent interactions between DnaJ, DnaK and GrpE are required for fully efficient folding. Also involved, together with DnaK and GrpE, in the DNA replication of plasmids through activation of initiation proteins. The chain is Chaperone protein DnaJ from Nitratidesulfovibrio vulgaris (strain ATCC 29579 / DSM 644 / CCUG 34227 / NCIMB 8303 / VKM B-1760 / Hildenborough) (Desulfovibrio vulgaris).